Reading from the N-terminus, the 1358-residue chain is Regulatory protein SIR4 (1358 aa).

Polar residues predominate over residues 1 to 15 (MPNDNKTPNRSSTPK). Disordered stretches follow at residues 1–98 (MPND…PHSN), 252–277 (SLSV…SPGI), 356–466 (HDEK…PPEI), 498–544 (VQGE…ISNG), 677–726 (ASTE…EDEQ), 752–787 (VSDS…DLDT), and 913–970 (HSQE…ENLS). Residues 26–39 (KIPEREEKSNEVKT) show a composition bias toward basic and acidic residues. Composition is skewed to polar residues over residues 49-66 (KSKN…SPHQ) and 75-96 (HKQL…SFPH). Positions 373–388 (QKMKEDADLKRMEILK) are enriched in basic and acidic residues. A compositionally biased stretch (polar residues) spans 428–437 (QENNYNSTSR). The span at 452-464 (KNGENKKIGKRPP) shows a compositional bias: basic and acidic residues. Over residues 507–517 (RNNTLNVTPSK) the composition is skewed to polar residues. Residue Ser692 is modified to Phosphoserine. Polar residues predominate over residues 706–720 (FPVSLSQPSKKSFAN). Residues 754-766 (DSDDSSSDNDSLT) show a composition bias toward acidic residues. The span at 777–787 (NEIKVTNDLDT) shows a compositional bias: basic and acidic residues. Positions 916–932 (EQNSSSAKPSQIPTVSS) are enriched in polar residues. Lys1128 is covalently cross-linked (Glycyl lysine isopeptide (Lys-Gly) (interchain with G-Cter in SUMO)). Residues 1271–1347 (LSFVDIVLSK…DAKINKLMEK (77 aa)) are a coiled coil.

In terms of assembly, homodimer. Interacts with MPS3. Interacts with RIS1. Interacts with SIR1, SIR2 and SIR3. Interacts with YKU80. Interacts with UBP10. Interacts with RAP1 (via C-terminus).

The protein resides in the nucleus. In terms of biological role, the proteins SIR1 through SIR4 are required for transcriptional repression of the silent mating type loci, HML and HMR. The proteins SIR2 through SIR4 repress mulitple loci by modulating chromatin structure. Involves the compaction of chromatin fiber into a more condensed form. This is Regulatory protein SIR4 (SIR4) from Saccharomyces cerevisiae (strain ATCC 204508 / S288c) (Baker's yeast).